The primary structure comprises 242 residues: Outer membrane protein class 4 (242 aa).

Positions 1–22 (MTKQLKLSALFVALLASGTAVA) are cleaved as a signal peptide. 7 repeat units span residues 69–70 (AP), 71–72 (EP), 73–74 (EP), 75–76 (EP), 77–78 (EP), 79–80 (AP), and 81–82 (AP). Residues 69–82 (APEPEPEPEPAPAP) form a 7 X 2 AA tandem repeats of X-P region. Residues 92–229 (YVDETISLSA…RVDVKIRSIV (138 aa)) form the OmpA-like domain. A disulfide bridge links cysteine 191 with cysteine 214.

This sequence belongs to the outer membrane OOP (TC 1.B.6) superfamily. In terms of assembly, the C-terminus exists in a monomer-dimer equilibrium.

It is found in the cell outer membrane. The chain is Outer membrane protein class 4 from Neisseria meningitidis serogroup B (strain ATCC BAA-335 / MC58).